The following is a 444-amino-acid chain: Ribulose bisphosphate carboxylase large chain (444 aa).

Residue Lys-5 is modified to N6,N6,N6-trimethyllysine. 2 residues coordinate substrate: Asn-114 and Thr-164. Catalysis depends on Lys-166, which acts as the Proton acceptor. Lys-168 is a binding site for substrate. Mg(2+) contacts are provided by Lys-192, Asp-194, and Glu-195. At Lys-192 the chain carries N6-carboxylysine. His-285 serves as the catalytic Proton acceptor. 3 residues coordinate substrate: Arg-286, His-318, and Ser-370.

Belongs to the RuBisCO large chain family. Type I subfamily. In terms of assembly, heterohexadecamer of 8 large chains and 8 small chains; disulfide-linked. The disulfide link is formed within the large subunit homodimers. Mg(2+) is required as a cofactor. In terms of processing, the disulfide bond which can form in the large chain dimeric partners within the hexadecamer appears to be associated with oxidative stress and protein turnover.

It is found in the plastid. The protein localises to the chloroplast. It carries out the reaction 2 (2R)-3-phosphoglycerate + 2 H(+) = D-ribulose 1,5-bisphosphate + CO2 + H2O. The catalysed reaction is D-ribulose 1,5-bisphosphate + O2 = 2-phosphoglycolate + (2R)-3-phosphoglycerate + 2 H(+). Its function is as follows. RuBisCO catalyzes two reactions: the carboxylation of D-ribulose 1,5-bisphosphate, the primary event in carbon dioxide fixation, as well as the oxidative fragmentation of the pentose substrate in the photorespiration process. Both reactions occur simultaneously and in competition at the same active site. This is Ribulose bisphosphate carboxylase large chain from Ginkgo biloba (Ginkgo).